The sequence spans 599 residues: Elongation factor 4 (599 aa).

In terms of domain architecture, tr-type G spans 2-184; the sequence is KNIRNFSIIA…RLVRDIPPPE (183 aa). Residues 14 to 19 and 131 to 134 contribute to the GTP site; these read DHGKST and NKID.

This sequence belongs to the TRAFAC class translation factor GTPase superfamily. Classic translation factor GTPase family. LepA subfamily.

The protein resides in the cell inner membrane. The catalysed reaction is GTP + H2O = GDP + phosphate + H(+). Its function is as follows. Required for accurate and efficient protein synthesis under certain stress conditions. May act as a fidelity factor of the translation reaction, by catalyzing a one-codon backward translocation of tRNAs on improperly translocated ribosomes. Back-translocation proceeds from a post-translocation (POST) complex to a pre-translocation (PRE) complex, thus giving elongation factor G a second chance to translocate the tRNAs correctly. Binds to ribosomes in a GTP-dependent manner. The sequence is that of Elongation factor 4 from Escherichia coli (strain UTI89 / UPEC).